Reading from the N-terminus, the 544-residue chain is Chaperonin GroEL (544 aa).

ATP contacts are provided by residues 30 to 33 (TLGP), 87 to 91 (DGTTT), glycine 414, 478 to 480 (NAL), and aspartate 494.

This sequence belongs to the chaperonin (HSP60) family. Forms a cylinder of 14 subunits composed of two heptameric rings stacked back-to-back. Interacts with the co-chaperonin GroES.

Its subcellular location is the cytoplasm. It carries out the reaction ATP + H2O + a folded polypeptide = ADP + phosphate + an unfolded polypeptide.. Functionally, together with its co-chaperonin GroES, plays an essential role in assisting protein folding. The GroEL-GroES system forms a nano-cage that allows encapsulation of the non-native substrate proteins and provides a physical environment optimized to promote and accelerate protein folding. The sequence is that of Chaperonin GroEL from Pelotomaculum thermopropionicum (strain DSM 13744 / JCM 10971 / SI).